Consider the following 497-residue polypeptide: PHD finger protein 10 (497 aa).

The disordered stretch occupies residues 1 to 61 (MAAAGPGAAL…SSRSCETSSQ (61 aa)). Phosphoserine is present on residues Ser-11, Ser-35, and Ser-49. The tract at residues 88-184 (MLQEQVSEYL…HYKEYSQMQQ (97 aa)) is essential to induce neural progenitor proliferation. The SAY stretch occupies residues 88–294 (MLQEQVSEYL…PPLDPELPAL (207 aa)). Lys-240 is covalently cross-linked (Glycyl lysine isopeptide (Lys-Gly) (interchain with G-Cter in SUMO2)). Ser-269 carries the phosphoserine modification. Positions 284 to 295 (EPPLDPELPALD) are enriched in low complexity. Residues 284-367 (EPPLDPELPA…KRSVLSKSVP (84 aa)) form a disordered region. The interval 291–333 (LPALDSDGDSDDGEDGGGDEKRKNKGTSDSSSGNVSEGDSPPD) is essential to induce neural progenitor proliferation. A phosphoserine mark is found at Ser-296, Ser-300, Ser-326, and Ser-330. Acidic residues predominate over residues 296–307 (SDGDSDDGEDGG). The span at 317-327 (TSDSSSGNVSE) shows a compositional bias: polar residues. Residues 344–358 (KSKDKMATPRKDGSK) show a composition bias toward basic and acidic residues. The segment at 378–435 (LCGICLKGKESNKKGKAESLIHCSQCDNSGHPSCLDMTMELVSMIKTYPWQCMECKTC) adopts a PHD-type 1; degenerate zinc-finger fold. Lys-384 is covalently cross-linked (Glycyl lysine isopeptide (Lys-Gly) (interchain with G-Cter in SUMO2)). A PHD-type 2; degenerate zinc finger spans residues 437-480 (ICGQPHHEEEMMFCDVCDRGYHTFCVGLGAIPSGRWICDCCQRA).

It belongs to the SAYP family. In terms of assembly, component of neural progenitors-specific chromatin remodeling complex (npBAF complex) composed of at least, ARID1A/BAF250A or ARID1B/BAF250B, SMARCD1/BAF60A, SMARCD3/BAF60C, SMARCA2/BRM/BAF190B, SMARCA4/BRG1/BAF190A, SMARCB1/BAF47, SMARCC1/BAF155, SMARCE1/BAF57, SMARCC2/BAF170, PHF10/BAF45A, ACTL6A/BAF53A and actin. Interacts with ACTL6A/BAF53A, SMARCA2/BRM/BAF190B, SMARCA4/BRG1/BAF190A and PBRM1/BAF180.

The protein resides in the nucleus. In terms of biological role, involved in transcription activity regulation by chromatin remodeling. Belongs to the neural progenitors-specific chromatin remodeling complex (npBAF complex) and is required for the proliferation of neural progenitors. During neural development a switch from a stem/progenitor to a post-mitotic chromatin remodeling mechanism occurs as neurons exit the cell cycle and become committed to their adult state. The transition from proliferating neural stem/progenitor cells to post-mitotic neurons requires a switch in subunit composition of the npBAF and nBAF complexes. As neural progenitors exit mitosis and differentiate into neurons, npBAF complexes which contain ACTL6A/BAF53A and PHF10/BAF45A, are exchanged for homologous alternative ACTL6B/BAF53B and DPF1/BAF45B or DPF3/BAF45C subunits in neuron-specific complexes (nBAF). The npBAF complex is essential for the self-renewal/proliferative capacity of the multipotent neural stem cells. The nBAF complex along with CREST plays a role regulating the activity of genes essential for dendrite growth. This chain is PHD finger protein 10 (Phf10), found in Rattus norvegicus (Rat).